We begin with the raw amino-acid sequence, 41 residues long: MANQKTYTYPIFTVRWLAIHALAVPTVFFLGSITAMQFIER.

The helical transmembrane segment at 16-32 threads the bilayer; that stretch reads WLAIHALAVPTVFFLGS. A heme-binding site is contributed by H20.

It belongs to the PsbE/PsbF family. In terms of assembly, heterodimer of an alpha subunit and a beta subunit. PSII is composed of 1 copy each of membrane proteins PsbA, PsbB, PsbC, PsbD, PsbE, PsbF, PsbH, PsbI, PsbJ, PsbK, PsbL, PsbM, PsbT, PsbX, PsbY, PsbZ, Psb30/Ycf12, at least 3 peripheral proteins of the oxygen-evolving complex and a large number of cofactors. It forms dimeric complexes. The cofactor is heme b.

The protein localises to the plastid. The protein resides in the chloroplast thylakoid membrane. Functionally, this b-type cytochrome is tightly associated with the reaction center of photosystem II (PSII). PSII is a light-driven water:plastoquinone oxidoreductase that uses light energy to abstract electrons from H(2)O, generating O(2) and a proton gradient subsequently used for ATP formation. It consists of a core antenna complex that captures photons, and an electron transfer chain that converts photonic excitation into a charge separation. The protein is Cytochrome b559 subunit beta of Oltmannsiellopsis viridis (Marine flagellate).